The following is a 526-amino-acid chain: Protein spinster homolog 1 (526 aa).

Residues Met-1–His-43 are disordered. Helical transmembrane passes span His-48–Ile-68, Gly-98–Leu-118, Leu-126–Ser-146, Leu-159–Phe-179, Met-187–Ser-207, Trp-218–Ala-238, Phe-272–Trp-292, Met-321–Ile-341, Leu-355–Ala-375, Phe-385–Leu-405, Leu-419–Ile-439, and Met-463–Ile-483.

It belongs to the major facilitator superfamily. Spinster (TC 2.A.1.49) family.

The protein resides in the lysosome membrane. The catalysed reaction is a 1-acyl-sn-glycero-3-phosphocholine(out) + H(+)(out) = a 1-acyl-sn-glycero-3-phosphocholine(in) + H(+)(in). It carries out the reaction a 1-acyl-sn-glycero-3-phosphoethanolamine(out) + H(+)(out) = a 1-acyl-sn-glycero-3-phosphoethanolamine(in) + H(+)(in). It catalyses the reaction a 1-O-(1Z-alkenyl)-sn-glycero-3-phosphocholine(out) + H(+)(out) = a 1-O-(1Z-alkenyl)-sn-glycero-3-phosphocholine(in) + H(+)(in). The enzyme catalyses a 1-O-(1Z-alkenyl)-sn-glycero-3-phosphoethanolamine(out) + H(+)(out) = a 1-O-(1Z-alkenyl)-sn-glycero-3-phosphoethanolamine(in) + H(+)(in). Its function is as follows. Mediates the rate-limiting, proton-dependent, lysosomal efflux of lysophospholipids. Selective for zwitterionic headgroups such as lysophosphatidylcholine (LPC) and lysophosphatidylethanolamine (LPE). Essential player in lysosomal homeostasis. This is Protein spinster homolog 1 (spns1) from Xenopus tropicalis (Western clawed frog).